Consider the following 393-residue polypeptide: NADH-quinone oxidoreductase subunit D (393 aa).

The protein belongs to the complex I 49 kDa subunit family. NDH-1 is composed of 14 different subunits. Subunits NuoB, C, D, E, F, and G constitute the peripheral sector of the complex.

The protein localises to the cell inner membrane. The enzyme catalyses a quinone + NADH + 5 H(+)(in) = a quinol + NAD(+) + 4 H(+)(out). Functionally, NDH-1 shuttles electrons from NADH, via FMN and iron-sulfur (Fe-S) centers, to quinones in the respiratory chain. The immediate electron acceptor for the enzyme in this species is believed to be ubiquinone. Couples the redox reaction to proton translocation (for every two electrons transferred, four hydrogen ions are translocated across the cytoplasmic membrane), and thus conserves the redox energy in a proton gradient. The sequence is that of NADH-quinone oxidoreductase subunit D from Ehrlichia canis (strain Jake).